We begin with the raw amino-acid sequence, 253 residues long: Light-harvesting complex stress-related protein 1, chloroplastic (253 aa).

A chloroplast-targeting transit peptide spans 1 to 39 (MAMMMRKAAAVPASSRRSVAVNSVSGKRTVSGKAGAPVP). Tyr-45 is a binding site for chlorophyll b. Residues Phe-60, Glu-81, and His-84 each coordinate chlorophyll a. Chlorophyll b is bound at residue Arg-86. The helical transmembrane segment at 87–107 (VAMLAALGFIVGEQLQDFPLF) threads the bilayer. Gln-124 contacts chlorophyll a. Residues 131–151 (EPLLIAIGVAESYRVAVGWAT) traverse the membrane as a helical segment. Glu-141 and Arg-144 together coordinate chlorophyll b. Chlorophyll a-binding residues include Lys-190, Glu-191, Asn-194, Arg-196, and Gln-208. The helical transmembrane segment at 197–217 (LAMIAIAAFVAQELVEQTEIF) threads the bilayer.

It belongs to the light-harvesting chlorophyll a/b-binding (LHC) protein family.

The protein localises to the plastid. It is found in the chloroplast thylakoid membrane. Its function is as follows. Required for non-photochemical quenching (NPQ), a mechanism that converts and dissipates the harmful excess absorbed light energy into heat and protect the photosynthetic apparatus from photo-oxidative damage. Is able to sense luminal acidification of the thylakoid membranes, which occurs along with elevated electron flow caused by excess light, and to induce a large, fast, and reversible pH-dependent quenching in LHCII-containing membranes. Mediates excitation energy transfer from light-harvesting complex II (LHCII) to photosystem I (PSI), rather than photosystem II (PSII), at low pH, which mimics the acidified lumen of the thylakoid membranes in high light-exposed chloroplasts. Activates PSI-dependent fluorescence quenching in addition to dissipating excitation energy in LHCII to avoid photooxidative stress under excess light. This Chlamydomonas reinhardtii (Chlamydomonas smithii) protein is Light-harvesting complex stress-related protein 1, chloroplastic.